We begin with the raw amino-acid sequence, 553 residues long: Vacuolar fusion protein MON1 homolog B (553 aa).

Residue Met-1 is modified to N-acetylmethionine. Disordered stretches follow at residues 1–111 (MEAG…DEDW) and 534–553 (STPPSTSADQAPNNGLFTGL). The span at 23 to 35 (FPREEAGDSERVH) shows a compositional bias: basic and acidic residues. Residues 52 to 72 (KDQPSSLLSPLPQTEAASSTC) show a composition bias toward polar residues. Position 57 is a phosphoserine (Ser-57). The segment covering 78-95 (AAASDSSPPGEPESNSEG) has biased composition (low complexity). The segment covering 96 to 108 (QGEDPDDGGDPSD) has biased composition (acidic residues). Residues 541–553 (ADQAPNNGLFTGL) are compositionally biased toward polar residues.

It belongs to the MON1/SAND family. As to quaternary structure, interacts with CCNT2; down-regulates CCNT2-mediated activation of viral promoters during herpes simplex virus 1/HHV-1 infection. Found in a complex with RMC1, CCZ1 MON1A and MON1B.

The sequence is that of Vacuolar fusion protein MON1 homolog B (Mon1b) from Mus musculus (Mouse).